An 83-amino-acid chain; its full sequence is Large ribosomal subunit protein eL31 (83 aa).

The protein belongs to the eukaryotic ribosomal protein eL31 family.

The protein is Large ribosomal subunit protein eL31 of Methanococcus vannielii (strain ATCC 35089 / DSM 1224 / JCM 13029 / OCM 148 / SB).